A 602-amino-acid polypeptide reads, in one-letter code: Elongation factor 4 (602 aa).

The tr-type G domain occupies 7–188 (ENIRNFSIIA…AIIELIPPPK (182 aa)). GTP-binding positions include 19 to 24 (DHGKST) and 135 to 138 (NKID).

The protein belongs to the TRAFAC class translation factor GTPase superfamily. Classic translation factor GTPase family. LepA subfamily.

The protein localises to the cell inner membrane. The enzyme catalyses GTP + H2O = GDP + phosphate + H(+). Its function is as follows. Required for accurate and efficient protein synthesis under certain stress conditions. May act as a fidelity factor of the translation reaction, by catalyzing a one-codon backward translocation of tRNAs on improperly translocated ribosomes. Back-translocation proceeds from a post-translocation (POST) complex to a pre-translocation (PRE) complex, thus giving elongation factor G a second chance to translocate the tRNAs correctly. Binds to ribosomes in a GTP-dependent manner. The sequence is that of Elongation factor 4 from Chlamydia caviae (strain ATCC VR-813 / DSM 19441 / 03DC25 / GPIC) (Chlamydophila caviae).